The following is a 138-amino-acid chain: Cellular retinoic acid-binding protein 2 (138 aa).

Residues 21–31 (KALGVNMMMRK) carry the Nuclear localization signal motif. Lysine 102 is covalently cross-linked (Glycyl lysine isopeptide (Lys-Gly) (interchain with G-Cter in SUMO)). 133-135 (RVY) lines the all-trans-retinoate pocket.

It belongs to the calycin superfamily. Fatty-acid binding protein (FABP) family. In terms of assembly, interacts with importin alpha. Interacts with RXR and RARA. Post-translationally, sumoylated in response to retinoic acid binding, sumoylation is critical for dissociation from ER and subsequent nuclear translocation. Embryo and skin of adult mouse.

Its subcellular location is the cytoplasm. The protein resides in the endoplasmic reticulum. The protein localises to the nucleus. Transports retinoic acid to the nucleus. Regulates the access of retinoic acid to the nuclear retinoic acid receptors. The chain is Cellular retinoic acid-binding protein 2 (Crabp2) from Mus musculus (Mouse).